Consider the following 323-residue polypeptide: Germination protease (323 aa).

Positions 1–6 are excised as a propeptide; sequence MSVRTD.

This sequence belongs to the peptidase A25 family. Homotetramer. Post-translationally, autoproteolytically processed. The inactive tetrameric zymogen termed p46 autoprocesses to a smaller form termed p41, which is active only during spore germination.

The catalysed reaction is Endopeptidase action with P4 Glu or Asp, P1 preferably Glu &gt; Asp, P1' hydrophobic and P2' Ala.. In terms of biological role, initiates the rapid degradation of small, acid-soluble proteins during spore germination. The protein is Germination protease of Clostridium tetani (strain Massachusetts / E88).